A 198-amino-acid polypeptide reads, in one-letter code: MIEFVYPHTQLVAGVDEVGRGPLVGAVVTAAVILDPARPIAGLNDSKKLSEKRRLALCEEIKEKALSWSLGRAEPHEIDELNILHATMLAMQRAVAGLHIAPEYVLIDGNRCPKLPMPSMAVVKGDSRVPEISAASILAKVTRDAEMAALDIVFPQYGFAQHKGYPTAFHLEKLAEHGATEHHRRSFGPVKRALGLAS.

An RNase H type-2 domain is found at 10-198; it reads QLVAGVDEVG…PVKRALGLAS (189 aa). Residues D16, E17, and D108 each coordinate a divalent metal cation.

It belongs to the RNase HII family. Mn(2+) serves as cofactor. It depends on Mg(2+) as a cofactor.

It is found in the cytoplasm. It catalyses the reaction Endonucleolytic cleavage to 5'-phosphomonoester.. Functionally, endonuclease that specifically degrades the RNA of RNA-DNA hybrids. The polypeptide is Ribonuclease HII (Escherichia coli O81 (strain ED1a)).